The chain runs to 918 residues: Serine/threonine-protein kinase D1 (918 aa).

Position 93 is a phosphotyrosine (Tyr93). The Phorbol-ester/DAG-type 1 zinc-finger motif lies at 144–194; it reads PHALFVHSYRAPAFCDHCGEMLWGLVRQGLKCEGCGLNYHKRCAFKIPNNC. Phosphoserine is present on residues Ser203, Ser206, Ser217, and Ser221. A Phorbol-ester/DAG-type 2 zinc finger spans residues 276-326; sequence PHTFVIHSYTRPTVCQFCKKLLKGLFRQGLQCKDCRFNCHKRCAPKVPNNC. 2 disordered regions span residues 338-362 and 379-410; these read SPGA…NSGL and AEGQ…SNNI. A compositionally biased stretch (acidic residues) spans 345–355; that stretch reads VVMEEGSDDND. Phosphoserine is present on Ser351. Residues 400–410 show a composition bias toward polar residues; sequence RTISPSTSNNI. Phosphoserine; by MAPK13 occurs at positions 403 and 407. The PH domain occupies 428–547; it reads TVMKEGWMVH…WEVAIQHALM (120 aa). Tyr438 is subject to Phosphotyrosine. Residue Ser454 is modified to Phosphoserine. At Tyr469 the chain carries Phosphotyrosine; by ABL. At Tyr508 the chain carries Phosphotyrosine. Residue Ser554 is modified to Phosphoserine. Residues 589-845 enclose the Protein kinase domain; the sequence is IFPDEVLGSG…VDKTLSHPWL (257 aa). Residues 595–603 and Lys618 contribute to the ATP site; that span reads LGSGQFGIV. Asp712 acts as the Proton acceptor in catalysis. Ser744 is subject to Phosphoserine; by PKC/PRKCD. Phosphoserine; by autocatalysis and PKC/PRKCD is present on Ser748. The residue at position 755 (Tyr755) is a Phosphotyrosine. The residue at position 916 (Ser916) is a Phosphoserine; by autocatalysis.

Belongs to the protein kinase superfamily. CAMK Ser/Thr protein kinase family. PKD subfamily. In terms of assembly, interacts (via N-terminus) with ADAP1/CENTA1. Interacts with MAPK13. Interacts with DAPK1 in an oxidative stress-regulated manner. Interacts with USP28; the interaction induces phosphorylation of USP28 and activated KRAS-mediated stabilization of ZNF304. Interacts with AKAP13 (via C-terminal domain). Requires Mg(2+) as cofactor. Post-translationally, phosphorylated at Ser-403 and Ser-407 by MAPK13 during regulation of insulin secretion in pancreatic beta cells. Phosphorylated by DAPK1. Phosphorylated at Tyr-93 and by ABL at Tyr-469, which primes the kinase in response to oxidative stress, and promotes a second step activating phosphorylation at Ser-744/Ser-748 by PKRD. Phosphorylated at Ser-916 upon S.enterica infection in macrophages.

It localises to the cytoplasm. The protein resides in the cell membrane. It is found in the golgi apparatus. Its subcellular location is the trans-Golgi network. It carries out the reaction L-seryl-[protein] + ATP = O-phospho-L-seryl-[protein] + ADP + H(+). The enzyme catalyses L-threonyl-[protein] + ATP = O-phospho-L-threonyl-[protein] + ADP + H(+). Activated by DAG and phorbol esters. Phorbol-ester/DAG-type domain 1 binds DAG with high affinity and appears to play the dominant role in mediating translocation to the cell membrane and trans-Golgi network. Phorbol-ester/DAG-type domain 2 binds phorbol ester with higher affinity. Autophosphorylation of Ser-748 and phosphorylation of Ser-744 by PKC relieves auto-inhibition by the PH domain. Phosphorylation on Tyr-469 by the SRC-ABL1 pathway in response to oxidative stress, is also required for activation. Activated by DAPK1 under oxidative stress. Functionally, serine/threonine-protein kinase that converts transient diacylglycerol (DAG) signals into prolonged physiological effects downstream of PKC, and is involved in the regulation of MAPK8/JNK1 and Ras signaling, Golgi membrane integrity and trafficking, cell survival through NF-kappa-B activation, cell migration, cell differentiation by mediating HDAC7 nuclear export, cell proliferation via MAPK1/3 (ERK1/2) signaling, and plays a role in cardiac hypertrophy, VEGFA-induced angiogenesis, genotoxic-induced apoptosis and flagellin-stimulated inflammatory response. Phosphorylates the epidermal growth factor receptor (EGFR) on dual threonine residues, which leads to the suppression of epidermal growth factor (EGF)-induced MAPK8/JNK1 activation and subsequent JUN phosphorylation. Phosphorylates RIN1, inducing RIN1 binding to 14-3-3 proteins YWHAB, YWHAE and YWHAZ and increased competition with RAF1 for binding to GTP-bound form of Ras proteins (NRAS, HRAS and KRAS). Acts downstream of the heterotrimeric G-protein beta/gamma-subunit complex to maintain the structural integrity of the Golgi membranes, and is required for protein transport along the secretory pathway. In the trans-Golgi network (TGN), regulates the fission of transport vesicles that are on their way to the plasma membrane. May act by activating the lipid kinase phosphatidylinositol 4-kinase beta (PI4KB) at the TGN for the local synthesis of phosphorylated inositol lipids, which induces a sequential production of DAG, phosphatidic acid (PA) and lyso-PA (LPA) that are necessary for membrane fission and generation of specific transport carriers to the cell surface. Under oxidative stress, is phosphorylated at Tyr-469 via SRC-ABL1 and contributes to cell survival by activating IKK complex and subsequent nuclear translocation and activation of NFKB1. Involved in cell migration by regulating integrin alpha-5/beta-3 recycling and promoting its recruitment in newly forming focal adhesion. In osteoblast differentiation, mediates the bone morphogenetic protein 2 (BMP2)-induced nuclear export of HDAC7, which results in the inhibition of HDAC7 transcriptional repression of RUNX2. In neurons, plays an important role in neuronal polarity by regulating the biogenesis of TGN-derived dendritic vesicles, and is involved in the maintenance of dendritic arborization and Golgi structure in hippocampal cells. May potentiate mitogenesis induced by the neuropeptide bombesin or vasopressin by mediating an increase in the duration of MAPK1/3 (ERK1/2) signaling, which leads to accumulation of immediate-early gene products including FOS that stimulate cell cycle progression. Plays an important role in the proliferative response induced by low calcium in keratinocytes, through sustained activation of MAPK1/3 (ERK1/2) pathway. Downstream of novel PKC signaling, plays a role in cardiac hypertrophy by phosphorylating HDAC5, which in turn triggers XPO1/CRM1-dependent nuclear export of HDAC5, MEF2A transcriptional activation and induction of downstream target genes that promote myocyte hypertrophy and pathological cardiac remodeling. Mediates cardiac troponin I (TNNI3) phosphorylation at the PKA sites, which results in reduced myofilament calcium sensitivity, and accelerated crossbridge cycling kinetics. The PRKD1-HDAC5 pathway is also involved in angiogenesis by mediating VEGFA-induced specific subset of gene expression, cell migration, and tube formation. In response to VEGFA, is necessary and required for HDAC7 phosphorylation which induces HDAC7 nuclear export and endothelial cell proliferation and migration. During apoptosis induced by cytarabine and other genotoxic agents, PRKD1 is cleaved by caspase-3 at Asp-378, resulting in activation of its kinase function and increased sensitivity of cells to the cytotoxic effects of genotoxic agents. In epithelial cells, is required for transducing flagellin-stimulated inflammatory responses by binding and phosphorylating TLR5, which contributes to MAPK14/p38 activation and production of inflammatory cytokines. Acts as an activator of NLRP3 inflammasome assembly by mediating phosphorylation of NLRP3. May play a role in inflammatory response by mediating activation of NF-kappa-B. May be involved in pain transmission by directly modulating TRPV1 receptor. Plays a role in activated KRAS-mediated stabilization of ZNF304 in colorectal cancer (CRC) cells. Regulates nuclear translocation of transcription factor TFEB in macrophages upon live S.enterica infection. This Mus musculus (Mouse) protein is Serine/threonine-protein kinase D1 (Prkd1).